An 868-amino-acid chain; its full sequence is MHELYQPREIEAAAQTFWDEQKSFEVSEQPGKDTFYCLSMFPYPSGKLHMGHVRNYTIGDVISRYQRMLGKNVLQPLGWDAFGMPAENAAIDNNVAPAKWTYENIAYMKNQLKSLGLAVDWSREVTTCKPDYYRWEQWLFTRLFEKGVIYRKNGTVNWDPVDQTVLANEQVIDGRGWRSGALIEKREIPMYYFKITAYADELLESLDELPGWPEQVKTMQRNWIGRSRGMEVQFPYDQASIGEAGALKVFTTRPDTLMGATYVAVAAEHPLATLAAQGNPGLQAFIDECKGGSVAEADVATQEKKGQPTSLFVEHPLTGEKLPVWVANYVLMHYGDGAVMAVPAHDERDFEFATHYGLPIKPVVRTSAGDQTPAPWQPAYGEHGELINSGEFTGLNFQAAFDAIEAALVKKSLGQSRTQFRLRDWGISRQRYWGCPIPIVHCDTCGDVPVPEDQLPVVLPEDVVPDGAGSPLARMPEFYECSCPKCGAPAKRETDTMDTFVESSWYYARYASPHYEGGLVEPNAANHWLPVDQYIGGIEHAILHLLYARFFHKLMRDEGLVTSNEPFKNLLTQGMVNAETYFRMETSGKKTWINPADVTLERDAKAKVISAKLTSDGLPVEIGGTEKMSKSKKNGIDPQTMIDQYGADTCRLFMMFASPPDMSLEWSDSGVEGSHRFLRRVWRLAQAHVAQGASTGLDIAALTDDQKTIRRSIHQAIRQASQDIGQNQKFNTAVAQVMTLMNVLEKAPQVTPQDRALLQEGLETVTLLLAPITPHISHELWTQLGHNEPVIDAGWPAFDANALVQDSLQLVIQVNGKLRGHIEMPASASREEVEAAARINENVLRFTDGLTIRKVIVVPGKLVNIVAS.

Residues 42-52 (PYPSGKLHMGH) carry the 'HIGH' region motif. The 'KMSKS' region signature appears at 627-631 (KMSKS). K630 is a binding site for ATP.

Belongs to the class-I aminoacyl-tRNA synthetase family.

It is found in the cytoplasm. The enzyme catalyses tRNA(Leu) + L-leucine + ATP = L-leucyl-tRNA(Leu) + AMP + diphosphate. The polypeptide is Leucine--tRNA ligase (Pseudomonas savastanoi pv. phaseolicola (strain 1448A / Race 6) (Pseudomonas syringae pv. phaseolicola (strain 1448A / Race 6))).